Consider the following 433-residue polypeptide: Serine/threonine-protein phosphatase 2A activator 2 (433 aa).

The segment covering 1-10 (MTSQAPPQPA) has biased composition (pro residues). Disordered regions lie at residues 1-67 (MTSQ…NWTF) and 367-400 (SMSE…GTGW). Over residues 11–23 (SSPGVAAPAAASS) the composition is skewed to low complexity. Residues 45 to 59 (NPTPIPETPALPTPP) show a composition bias toward pro residues. Residues 367 to 382 (SMSEDTGAGDEADVED) show a composition bias toward acidic residues. Residues 383 to 396 (DPHAGHDHTGKAHD) are compositionally biased toward basic and acidic residues.

The protein belongs to the PTPA-type PPIase family.

The protein resides in the cytoplasm. The catalysed reaction is [protein]-peptidylproline (omega=180) = [protein]-peptidylproline (omega=0). Its function is as follows. PPIases accelerate the folding of proteins. It catalyzes the cis-trans isomerization of proline imidic peptide bonds in oligopeptides. Acts as a regulatory subunit for PP2A-like phosphatases modulating their activity or substrate specificity, probably by inducing a conformational change in the catalytic subunit, a direct target of the PPIase. Can reactivate inactive phosphatase PP2A-phosphatase methylesterase complexes (PP2Ai) in presence of ATP and Mg(2+) by dissociating the inactive form from the complex. The sequence is that of Serine/threonine-protein phosphatase 2A activator 2 (RRD2) from Gibberella zeae (strain ATCC MYA-4620 / CBS 123657 / FGSC 9075 / NRRL 31084 / PH-1) (Wheat head blight fungus).